A 475-amino-acid polypeptide reads, in one-letter code: Tubulin gamma chain (475 aa).

142 to 148 (AGGTGSG) is a binding site for GTP. Residues 455–475 (GKQVSGEGNTSGTVDSRVGAS) are disordered.

The protein belongs to the tubulin family.

It localises to the cytoplasm. Its subcellular location is the cytoskeleton. The protein localises to the microtubule organizing center. Its function is as follows. Tubulin is the major constituent of microtubules. The gamma chain is found at microtubule organizing centers (MTOC) such as the spindle poles, suggesting that it is involved in the minus-end nucleation of microtubule assembly. The polypeptide is Tubulin gamma chain (TUBG1) (Physcomitrium patens (Spreading-leaved earth moss)).